Consider the following 348-residue polypeptide: D-lactate dehydrogenase kk1H (348 aa).

Residues 158–159 (RI), Asp-178, 208–209 (CP), 235–237 (TSR), and Asp-261 each bind NAD(+). Arg-237 is an active-site residue. The active site involves Glu-266. His-298 (proton donor) is an active-site residue.

This sequence belongs to the D-isomer specific 2-hydroxyacid dehydrogenase family.

Its pathway is secondary metabolite biosynthesis. Its function is as follows. D-lactate dehydrogenase; part of the gene cluster that mediates the biosynthesis of KK-1, a novel cyclic depsipeptide with 10 residues which is a promising active compound with high activity against many plant pathogens, especially Botrytis cinerea. Within the pathway, kk1H catalyzes in the synthesis of D-lactic acid from pyruvic acid, which is recognized by the A domain of the first kk1B module. The nonribosomal peptide synthetase (NRPS) kk1B catalyzes the elongation and cyclization of the decapeptide chain composed of 1 D-lactic acid residue (D-Lac), 1 pipecolic acid residue (Pip), 1 aspartic acid residue (Asp), 1 isoleucine residue (Ile), 1 glycine residue (Gly), 1 tyrosine residue (Tyr) and 4 valine residues (Val). The Asp, Ile and 3 Val residues are N-methylated by the 5 methyltransferase domains from the NRPS (found in modules 3, 5, 6, 7 and 9), whereas the Tyr residue is O-methylated by the cluster encoded O-methyltransferase kk1A. The thioesterase kk1J is likely to be involved in the corrective mechanism of peptide chain synthesis. The D-lactate dehydrogenase kk1H is involved in the synthesis of D-lactic acid from pyruvic acid, which is recognized by the A domain of the first kk1B module. The pyrroline-5-carboxylate reductase kk1I is involved in the synthesis of the L-pipecolic acid residue of KK-1 from delta-1-pyrroline-5-carboxylate (P5C), a metabolic intermediate of lysine. It still is unclear how kk1C and kk1D are involved in the production of KK-1. This Curvularia clavata protein is D-lactate dehydrogenase kk1H.